A 239-amino-acid polypeptide reads, in one-letter code: Prolactin-8A4 (239 aa).

Residues 1 to 31 (MMKLALSQPPFSGTLLMLVVSILLLWEKAAS) form the signal peptide. Intrachain disulfides connect C35-C42 and C102-C215. N211 and N218 each carry an N-linked (GlcNAc...) asparagine glycan. An intrachain disulfide couples C232 to C239.

The protein belongs to the somatotropin/prolactin family. In terms of tissue distribution, placental basal zone cells.

Its subcellular location is the secreted. In Rattus norvegicus (Rat), this protein is Prolactin-8A4 (Prl8a4).